The following is a 125-amino-acid chain: Small ribosomal subunit protein bS6 (125 aa).

Positions 96 to 125 (VTAPSPMMREEKAKSAPQPAEEAKETTLAT) are disordered. The span at 116–125 (EEAKETTLAT) shows a compositional bias: basic and acidic residues.

It belongs to the bacterial ribosomal protein bS6 family.

Binds together with bS18 to 16S ribosomal RNA. The sequence is that of Small ribosomal subunit protein bS6 from Nitrosospira multiformis (strain ATCC 25196 / NCIMB 11849 / C 71).